The chain runs to 186 residues: Elongation factor P (186 aa).

This sequence belongs to the elongation factor P family.

Its subcellular location is the cytoplasm. It participates in protein biosynthesis; polypeptide chain elongation. Its function is as follows. Involved in peptide bond synthesis. Stimulates efficient translation and peptide-bond synthesis on native or reconstituted 70S ribosomes in vitro. Probably functions indirectly by altering the affinity of the ribosome for aminoacyl-tRNA, thus increasing their reactivity as acceptors for peptidyl transferase. This is Elongation factor P from Polynucleobacter asymbioticus (strain DSM 18221 / CIP 109841 / QLW-P1DMWA-1) (Polynucleobacter necessarius subsp. asymbioticus).